Reading from the N-terminus, the 1542-residue chain is ABC multidrug transporter AFR1 (1542 aa).

Disordered stretches follow at residues M1 to D84 and S118 to K141. Polar residues predominate over residues T18–T41. Basic and acidic residues predominate over residues D60 to E69. N207 and N397 each carry an N-linked (GlcNAc...) asparagine glycan. The ABC transporter 1 domain occupies L221–P473. Transmembrane regions (helical) follow at residues F584–Y604, G618–S638, V669–L689, G694–F714, and V726–I746. An N-linked (GlcNAc...) asparagine glycan is attached at N822. A helical transmembrane segment spans residues F844–Y864. Residues F917 to G1159 enclose the ABC transporter 2 domain. N-linked (GlcNAc...) asparagine glycosylation occurs at N923. Position 953–960 (G953–T960) interacts with ATP. The next 6 helical transmembrane spans lie at W1253–L1273, V1284–Q1304, M1335–F1355, F1365–A1385, I1390–V1410, and F1516–F1536.

It belongs to the ABC transporter superfamily. ABCG family. PDR (TC 3.A.1.205) subfamily.

The protein localises to the cell membrane. It carries out the reaction itraconazole(in) + ATP + H2O = itraconazole(out) + ADP + phosphate + H(+). It catalyses the reaction voriconazole(in) + ATP + H2O = voriconazole(out) + ADP + phosphate + H(+). The catalysed reaction is fluconazole(in) + ATP + H2O = fluconazole(out) + ADP + phosphate + H(+). In terms of biological role, major pleiotropic ABC efflux transporter that confers resistance to structurally and functionally unrelated compounds including azoles such as fluconazole (FLC), itraconazole (ITC), posaconazole (POS), and voriconazole (VRC). Is also able to efflux the eukaryote protein synthesis inhibitor cycloheximide (CHX). The sequence is that of ABC multidrug transporter AFR1 from Cryptococcus deuterogattii (strain R265) (Cryptococcus gattii VGII (strain R265)).